Consider the following 222-residue polypeptide: Phosphoribosylformylglycinamidine synthase subunit PurQ (222 aa).

Positions Arg-2 to Gln-222 constitute a Glutamine amidotransferase type-1 domain. Catalysis depends on Cys-87, which acts as the Nucleophile. Residues His-195 and Glu-197 contribute to the active site.

In terms of assembly, part of the FGAM synthase complex composed of 1 PurL, 1 PurQ and 2 PurS subunits.

It is found in the cytoplasm. The catalysed reaction is N(2)-formyl-N(1)-(5-phospho-beta-D-ribosyl)glycinamide + L-glutamine + ATP + H2O = 2-formamido-N(1)-(5-O-phospho-beta-D-ribosyl)acetamidine + L-glutamate + ADP + phosphate + H(+). It carries out the reaction L-glutamine + H2O = L-glutamate + NH4(+). It participates in purine metabolism; IMP biosynthesis via de novo pathway; 5-amino-1-(5-phospho-D-ribosyl)imidazole from N(2)-formyl-N(1)-(5-phospho-D-ribosyl)glycinamide: step 1/2. Part of the phosphoribosylformylglycinamidine synthase complex involved in the purines biosynthetic pathway. Catalyzes the ATP-dependent conversion of formylglycinamide ribonucleotide (FGAR) and glutamine to yield formylglycinamidine ribonucleotide (FGAM) and glutamate. The FGAM synthase complex is composed of three subunits. PurQ produces an ammonia molecule by converting glutamine to glutamate. PurL transfers the ammonia molecule to FGAR to form FGAM in an ATP-dependent manner. PurS interacts with PurQ and PurL and is thought to assist in the transfer of the ammonia molecule from PurQ to PurL. This chain is Phosphoribosylformylglycinamidine synthase subunit PurQ, found in Deinococcus geothermalis (strain DSM 11300 / CIP 105573 / AG-3a).